The primary structure comprises 86 residues: Toxin Td2 (86 aa).

The first 20 residues, 1 to 20 (MTRFVLFLNCFFLICMVVEC), serve as a signal peptide directing secretion. In terms of domain architecture, LCN-type CS-alpha/beta spans 21 to 83 (KEGYLMGADG…TWDRATNTCG (63 aa)). 4 disulfide bridges follow: cysteine 31/cysteine 82, cysteine 35/cysteine 57, cysteine 43/cysteine 63, and cysteine 47/cysteine 65. Arginine 84 is subject to Arginine amide.

In terms of tissue distribution, expressed by the venom gland.

It is found in the secreted. Its function is as follows. Beta toxins bind voltage-independently at site-4 of sodium channels (Nav) and shift the voltage of activation toward more negative potentials thereby affecting sodium channel activation and promoting spontaneous and repetitive firing. The sequence is that of Toxin Td2 from Tityus discrepans (Venezuelan scorpion).